The primary structure comprises 58 residues: Proteinase inhibitor PSKP-1 (58 aa).

Residues 1 to 58 (VIEPKCYKYEGKKCPPDINPVCGTDKRTYYNECALCVFIRQSTKKADKAIKIKKWGKC) form the Kazal-like domain. 3 disulfides stabilise this stretch: cysteine 6/cysteine 36, cysteine 14/cysteine 33, and cysteine 22/cysteine 58.

As to quaternary structure, monomer. In terms of tissue distribution, skin.

The protein localises to the secreted. Functionally, has antibacterial activity against Gram-negative bacterium E.coli ATCC 11229. Shows hemagglutinating activity. Inhibits prolyl endopeptidase, but not trypsin, chymotrypsin, V8 protease and proteinase K. May have a role in mucosal defense against microbes by interacting directly with their membranes. The chain is Proteinase inhibitor PSKP-1 from Phyllomedusa sauvagei (Sauvage's leaf frog).